The following is a 985-amino-acid chain: Alpha-glucosidase (985 aa).

A signal peptide spans 1–25 (MVKLTHLLARAWLVPLAYGASQSLL). An O-linked (Man) threonine glycan is attached at Thr-36. 5 N-linked (GlcNAc...) asparagine glycosylation sites follow: Asn-124, Asn-143, Asn-218, Asn-347, and Asn-422. Asp-490 functions as the Nucleophile in the catalytic mechanism. Glu-493 is a catalytic residue. N-linked (GlcNAc...) asparagine glycans are attached at residues Asn-506, Asn-534, and Asn-537. 2 O-linked (Man) serine glycosylation sites follow: Ser-545 and Ser-550. An O-linked (Man) threonine glycan is attached at Thr-559. A glycan (O-linked (Man) serine) is linked at Ser-560. A glycan (O-linked (Man) threonine) is linked at Thr-561. Residue Ser-562 is glycosylated (O-linked (Man) serine). Thr-571 carries O-linked (Man) threonine glycosylation. Asn-601 and Asn-623 each carry an N-linked (GlcNAc...) asparagine glycan. Catalysis depends on Asp-660, which acts as the Proton donor. Asn-835 and Asn-881 each carry an N-linked (GlcNAc...) asparagine glycan. O-linked (Man) serine glycosylation is present at Ser-895. N-linked (GlcNAc...) asparagine glycosylation is found at Asn-899, Asn-957, and Asn-970.

The protein belongs to the glycosyl hydrolase 31 family. The O-linked saccharide is not identified, but is probably mannose.

It carries out the reaction Hydrolysis of terminal, non-reducing (1-&gt;4)-linked alpha-D-glucose residues with release of alpha-D-glucose.. Its function is as follows. Hydrolyzes malto-oligosaccharides, but has a low activity toward soluble starch. In Aspergillus niger, this protein is Alpha-glucosidase (aglA).